A 167-amino-acid chain; its full sequence is LIM domain transcription factor LMO4.1 (167 aa).

The span at 1-17 (MVNNRVTESTTTAVSSN) shows a compositional bias: polar residues. Residues 1 to 20 (MVNNRVTESTTTAVSSNGGP) are disordered. LIM zinc-binding domains lie at 22–84 (KACA…LFGS) and 86–148 (GACS…GLLS).

Its function is as follows. Acts as a positive cofactor of GATA transcription factors to establish the identity of the ventral mesoderm during gastrulation. Down-regulation in the dorsal mesoderm is necessary for the proper formation of this territory since, when present, lmo4 may bind ldb1 and restrict the availability of this cofactor for Spemman organizer transcription factors. At neurula stages, suppresses primary neuron differentiation and modulates gene expression at the Isthmic Organizer of the midbrain-hindbrain boundary. This chain is LIM domain transcription factor LMO4.1 (lmo4.1), found in Xenopus tropicalis (Western clawed frog).